The following is a 256-amino-acid chain: Protein FixA (256 aa).

Belongs to the ETF beta-subunit/FixA family. Heterodimer of FixA and FixB.

Its pathway is amine and polyamine metabolism; carnitine metabolism. Its function is as follows. Required for anaerobic carnitine reduction. May bring reductant to CaiA. The protein is Protein FixA of Salmonella paratyphi A (strain ATCC 9150 / SARB42).